The primary structure comprises 87 residues: Protein ORF3 (87 aa).

A disordered region spans residues 58 to 87 (GALNNAPREPSAPPLSQTLSPRQVLARYQM). The PTAP/PSAP motif signature appears at 67 to 70 (PSAP).

The protein belongs to the hepevirus ORF3 protein family. Post-translationally, palmitoylated in the N-terminus.

It is found in the host endoplasmic reticulum membrane. It localises to the host cytoplasm. Its subcellular location is the host cytoskeleton. The protein localises to the virion. The protein resides in the host cell membrane. Functionally, small multifunctional phosphoprotein involved in virion morphogenesis, egress and counteracting host innate immunity. The polypeptide is Protein ORF3 (Avian hepatitis E virus (isolate Chicken/California/Meng) (AHEV)).